The chain runs to 436 residues: T-box transcription factor TBX6 (436 aa).

Residues 100 to 273 constitute a DNA-binding region (T-box); that stretch reads LWKEFSAVGT…ANPFAKGFRE (174 aa). Residues 274 to 284 are compositionally biased toward basic and acidic residues; that stretch reads NGRNCKRERDA. Disordered stretches follow at residues 274–344 and 360–383; these read NGRN…CGGP and PSHL…APYS. Residues 332 to 344 are compositionally biased toward low complexity; sequence EAASASAPPCGGP.

It localises to the nucleus. Functionally, T-box transcription factor that plays an essential role in the determination of the fate of axial stem cells: neural vs mesodermal. Acts in part by down-regulating, a specific enhancer (N1) of SOX2, to inhibit neural development. Seems to play also an essential role in left/right axis determination and acts through effects on Notch signaling around the node as well as through an effect on the morphology and motility of the nodal cilia. The polypeptide is T-box transcription factor TBX6 (Tbx6) (Mus musculus (Mouse)).